The following is a 127-amino-acid chain: Holo-[acyl-carrier-protein] synthase (127 aa).

Positions 9 and 58 each coordinate Mg(2+).

The protein belongs to the P-Pant transferase superfamily. AcpS family. It depends on Mg(2+) as a cofactor.

The protein localises to the cytoplasm. The catalysed reaction is apo-[ACP] + CoA = holo-[ACP] + adenosine 3',5'-bisphosphate + H(+). Functionally, transfers the 4'-phosphopantetheine moiety from coenzyme A to a Ser of acyl-carrier-protein. The polypeptide is Holo-[acyl-carrier-protein] synthase (Shewanella sp. (strain ANA-3)).